Here is a 461-residue protein sequence, read N- to C-terminus: UDP-N-acetylmuramate--L-alanine ligase (461 aa).

Position 112–118 (112–118 (GTHGKTT)) interacts with ATP.

Belongs to the MurCDEF family.

It localises to the cytoplasm. The catalysed reaction is UDP-N-acetyl-alpha-D-muramate + L-alanine + ATP = UDP-N-acetyl-alpha-D-muramoyl-L-alanine + ADP + phosphate + H(+). Its pathway is cell wall biogenesis; peptidoglycan biosynthesis. Functionally, cell wall formation. In Geobacter sp. (strain M21), this protein is UDP-N-acetylmuramate--L-alanine ligase.